We begin with the raw amino-acid sequence, 219 residues long: Response regulator ArlR (219 aa).

One can recognise a Response regulatory domain in the interval 3 to 116 (QILIVEDEQN…ELLARIRAIL (114 aa)). Asp-52 bears the 4-aspartylphosphate mark. A DNA-binding region (ompR/PhoB-type) is located at residues 122 to 219 (KDIIDVNGIT…TVRGVGYVIR (98 aa)).

Post-translationally, phosphorylated by ArlS.

The protein localises to the cytoplasm. Its function is as follows. Member of the two-component regulatory system ArlS/ArlR involved in the regulation of adhesion, autolysis, multidrug resistance and virulence. The chain is Response regulator ArlR (arlR) from Staphylococcus aureus (strain USA300).